We begin with the raw amino-acid sequence, 180 residues long: Cytochrome b6-f complex iron-sulfur subunit 2 (180 aa).

The chain crosses the membrane as a helical span at residues Leu-21–Ile-43. Positions Val-66–Val-162 constitute a Rieske domain. 4 residues coordinate [2Fe-2S] cluster: Cys-108, His-110, Cys-126, and His-129. Cys-113 and Cys-128 are oxidised to a cystine.

It belongs to the Rieske iron-sulfur protein family. As to quaternary structure, the 4 large subunits of the cytochrome b6-f complex are cytochrome b6, subunit IV (17 kDa polypeptide, PetD), cytochrome f and the Rieske protein, while the 4 small subunits are PetG, PetL, PetM and PetN. The complex functions as a dimer. The cofactor is [2Fe-2S] cluster.

It is found in the cellular thylakoid membrane. It carries out the reaction 2 oxidized [plastocyanin] + a plastoquinol + 2 H(+)(in) = 2 reduced [plastocyanin] + a plastoquinone + 4 H(+)(out). Component of the cytochrome b6-f complex, which mediates electron transfer between photosystem II (PSII) and photosystem I (PSI), cyclic electron flow around PSI, and state transitions. This chain is Cytochrome b6-f complex iron-sulfur subunit 2, found in Synechocystis sp. (strain ATCC 27184 / PCC 6803 / Kazusa).